The sequence spans 337 residues: Anthranilate phosphoribosyltransferase (337 aa).

Residues glycine 81, 84-85 (GD), serine 89, 91-94 (NVST), 109-117 (KHGNRAMSS), and alanine 121 each bind 5-phospho-alpha-D-ribose 1-diphosphate. Glycine 81 is a binding site for anthranilate. Serine 93 serves as a coordination point for Mg(2+). Anthranilate is bound at residue asparagine 112. Residue arginine 167 participates in anthranilate binding. Mg(2+)-binding residues include aspartate 226 and glutamate 227.

It belongs to the anthranilate phosphoribosyltransferase family. In terms of assembly, homodimer. Mg(2+) serves as cofactor.

The catalysed reaction is N-(5-phospho-beta-D-ribosyl)anthranilate + diphosphate = 5-phospho-alpha-D-ribose 1-diphosphate + anthranilate. The protein operates within amino-acid biosynthesis; L-tryptophan biosynthesis; L-tryptophan from chorismate: step 2/5. Its function is as follows. Catalyzes the transfer of the phosphoribosyl group of 5-phosphorylribose-1-pyrophosphate (PRPP) to anthranilate to yield N-(5'-phosphoribosyl)-anthranilate (PRA). The protein is Anthranilate phosphoribosyltransferase of Afipia carboxidovorans (strain ATCC 49405 / DSM 1227 / KCTC 32145 / OM5) (Oligotropha carboxidovorans).